The chain runs to 317 residues: MNYPDIESPPAIFLMGPTASGKSAMALEIARRFPVEIIGVDSAQVYRFMDIGSAKPDKLILSEIPHHLIDLIDPDENYSAARFREDALSVMREITARGRVPLLVGGTMLYFKVLRQGLAALPPADDSVRRALEQQALDKGWPAMHAVLSQLDPVTAGRIQPNDSQRIQRALEVCYLTGKPMSEMLEQQQNADFPFRVFNIALLPGDRSVLHDRISQRFATMLEAGLIDEVRLIREQFHVNGDMPSMRCVGYRQVCMYLDNEISFARMQETGVFATRQLAKRQLTWLRSMSGLQIFDCLENRLARQIIDLIQAQRLFS.

Residue 16-23 coordinates ATP; it reads GPTASGKS. A substrate-binding site is contributed by 18-23; that stretch reads TASGKS. Interaction with substrate tRNA stretches follow at residues 41–44, 165–169, and 247–252; these read DSAQ, QRIQR, and RCVGYR.

The protein belongs to the IPP transferase family. As to quaternary structure, monomer. It depends on Mg(2+) as a cofactor.

It catalyses the reaction adenosine(37) in tRNA + dimethylallyl diphosphate = N(6)-dimethylallyladenosine(37) in tRNA + diphosphate. Functionally, catalyzes the transfer of a dimethylallyl group onto the adenine at position 37 in tRNAs that read codons beginning with uridine, leading to the formation of N6-(dimethylallyl)adenosine (i(6)A). The polypeptide is tRNA dimethylallyltransferase (Nitrosomonas europaea (strain ATCC 19718 / CIP 103999 / KCTC 2705 / NBRC 14298)).